A 145-amino-acid chain; its full sequence is Basic phospholipase A2 KPA2 (145 aa).

The signal sequence occupies residues 1–19 (MYPAHLLVLVAVCVSLLGA). Positions 20-27 (ANIPPQPL) are excised as a propeptide. 7 disulfides stabilise this stretch: cysteine 38–cysteine 97, cysteine 52–cysteine 144, cysteine 54–cysteine 70, cysteine 69–cysteine 125, cysteine 76–cysteine 118, cysteine 86–cysteine 111, and cysteine 104–cysteine 116. Ca(2+) contacts are provided by tyrosine 53, glycine 55, and glycine 57. Residue histidine 73 is part of the active site. Aspartate 74 contacts Ca(2+). Aspartate 119 is an active-site residue.

The protein belongs to the phospholipase A2 family. Group I subfamily. D49 sub-subfamily. In terms of assembly, monomer. The cofactor is Ca(2+). In terms of tissue distribution, expressed by the venom gland.

It localises to the secreted. The catalysed reaction is a 1,2-diacyl-sn-glycero-3-phosphocholine + H2O = a 1-acyl-sn-glycero-3-phosphocholine + a fatty acid + H(+). Snake venom phospholipase A2 (PLA2) that shows anticoagulant and neurotoxic activities. PLA2 catalyzes the calcium-dependent hydrolysis of the 2-acyl groups in 3-sn-phosphoglycerides. The chain is Basic phospholipase A2 KPA2 from Bungarus caeruleus (Indian krait).